The sequence spans 89 residues: Large ribosomal subunit protein bL27 (89 aa).

The segment at 1-22 (MAHKKGASSSRNGRDSNAQRLG) is disordered. Polar residues predominate over residues 7–19 (ASSSRNGRDSNAQ).

Belongs to the bacterial ribosomal protein bL27 family.

The protein is Large ribosomal subunit protein bL27 of Cutibacterium acnes (strain DSM 16379 / KPA171202) (Propionibacterium acnes).